The sequence spans 389 residues: MAYFNDIAPIKYEGTKTKNMFAFRHYNPEEVVAGKTMEEQLHFALAFWHTITMDGADPFGSATMERPWDLEGGSELDRAHRRVDAFFEIAEKLGVKYYCFHDIDIAPTGNSLKEFYANLDEITDHLLEKQKETGIKLLWNTANMFSNPRYMNGVSTSNRAEVFAYGAAQVKKGLELSKKLGGENYVFWGGREGYESLLNTDMGLEMDHMAKFFHLAIDYAKSINHLPIFLIELKPKEPMTHQYDFDAATALAFLQKYDLDKYFKLNIETNHAWLAGHTFEHELNTARTFGALGSIDANQGNYLLGWDTDEFPTLVIDITLQGWILMHVRLKVQQPSLKTNSCLISLKNVIVHTRRQKLVNLSKMEQQLLKVLLLMLLSMGMTSNLILTT.

Active-site residues include H101 and D104. Residues E232, E268, H271, D296, D307, and D309 each contribute to the Mg(2+) site.

The protein belongs to the xylose isomerase family. In terms of assembly, homotetramer. Mg(2+) is required as a cofactor.

The protein localises to the cytoplasm. The catalysed reaction is alpha-D-xylose = alpha-D-xylulofuranose. The sequence is that of Xylose isomerase from Lactococcus lactis subsp. cremoris (strain SK11).